Reading from the N-terminus, the 389-residue chain is MKIHEYQGKEILRKFGVAVPRGKPVFSVDDAVKAAEELGGPVWVVKAQIHAGGRGKGGGVKVAKSLDQVREYSEQILGMQLVTHQTGPEGQKVNRLLIEEGADIKKELYVGLVIDRVSQKIVVMASSEGGMDVEEVAEKTPELIHKIAVDPATGLKDAEADELATKIGVPAASLPQARAILQGLYKAFWETDASLAEINPLILTGDGKVIALDAKFNFDSNALFRHPEIVAYRDLDEEDPAEVEASKFDLAYISLDGNIGCLVNGAGLAMATMDTIKLFGGEPANFLDVGGGATTEKVTEAFKIMLKNPNLTAILVNIFGGIMRCDVIAEGVIAASKAVSLKVPLVVRMKGTNEDLGKKMLAESGLPIIAADSMEEAAQKVVAAAAGKA.

Residues 9 to 244 (KEILRKFGVA…LDEEDPAEVE (236 aa)) enclose the ATP-grasp domain. Residues Lys-46, 53-55 (GRG), Glu-99, Ala-102, and Glu-107 each bind ATP. 2 residues coordinate Mg(2+): Asn-199 and Asp-213. Substrate-binding positions include Asn-264 and 321–323 (GIM).

Belongs to the succinate/malate CoA ligase beta subunit family. In terms of assembly, heterotetramer of two alpha and two beta subunits. It depends on Mg(2+) as a cofactor.

The enzyme catalyses succinate + ATP + CoA = succinyl-CoA + ADP + phosphate. It catalyses the reaction GTP + succinate + CoA = succinyl-CoA + GDP + phosphate. Its pathway is carbohydrate metabolism; tricarboxylic acid cycle; succinate from succinyl-CoA (ligase route): step 1/1. Its function is as follows. Succinyl-CoA synthetase functions in the citric acid cycle (TCA), coupling the hydrolysis of succinyl-CoA to the synthesis of either ATP or GTP and thus represents the only step of substrate-level phosphorylation in the TCA. The beta subunit provides nucleotide specificity of the enzyme and binds the substrate succinate, while the binding sites for coenzyme A and phosphate are found in the alpha subunit. The sequence is that of Succinate--CoA ligase [ADP-forming] subunit beta from Paraburkholderia phytofirmans (strain DSM 17436 / LMG 22146 / PsJN) (Burkholderia phytofirmans).